We begin with the raw amino-acid sequence, 334 residues long: Adenine deaminase (334 aa).

Residues H14, H16, and H194 each coordinate Zn(2+). E197 acts as the Proton donor in catalysis. Residue D275 coordinates Zn(2+). Position 276 (D276) interacts with substrate.

It belongs to the metallo-dependent hydrolases superfamily. Adenosine and AMP deaminases family. Adenine deaminase type 2 subfamily. The cofactor is Zn(2+).

It carries out the reaction adenine + H2O + H(+) = hypoxanthine + NH4(+). Catalyzes the hydrolytic deamination of adenine to hypoxanthine. Plays an important role in the purine salvage pathway and in nitrogen catabolism. The sequence is that of Adenine deaminase from Hahella chejuensis (strain KCTC 2396).